The chain runs to 543 residues: Hydroxylamine reductase (543 aa).

Positions 3, 6, 15, and 21 each coordinate [4Fe-4S] cluster. The hybrid [4Fe-2O-2S] cluster site is built by His244, Glu268, Cys312, Cys399, Cys427, Cys452, Glu486, and Lys488. Cys399 is modified (cysteine persulfide).

This sequence belongs to the HCP family. [4Fe-4S] cluster serves as cofactor. Requires hybrid [4Fe-2O-2S] cluster as cofactor.

The protein localises to the cytoplasm. It catalyses the reaction A + NH4(+) + H2O = hydroxylamine + AH2 + H(+). In terms of biological role, catalyzes the reduction of hydroxylamine to form NH(3) and H(2)O. This chain is Hydroxylamine reductase, found in Methanocella arvoryzae (strain DSM 22066 / NBRC 105507 / MRE50).